The primary structure comprises 357 residues: Protein RecA (357 aa).

An ATP-binding site is contributed by 69–76 (GPESSGKT). The tract at residues 337–357 (SANSVAKNNEDDEDEDVEEEE) is disordered. Residues 346–357 (EDDEDEDVEEEE) show a composition bias toward acidic residues.

The protein belongs to the RecA family.

The protein localises to the cytoplasm. In terms of biological role, can catalyze the hydrolysis of ATP in the presence of single-stranded DNA, the ATP-dependent uptake of single-stranded DNA by duplex DNA, and the ATP-dependent hybridization of homologous single-stranded DNAs. It interacts with LexA causing its activation and leading to its autocatalytic cleavage. This Nostoc sp. (strain PCC 7120 / SAG 25.82 / UTEX 2576) protein is Protein RecA.